Reading from the N-terminus, the 1869-residue chain is Chitin synthase 6 (1869 aa).

The interval 1–23 is disordered; it reads MAMNLPPLAGSGGAHTQPSLPAL. Residues 1–778 form the Myosin motor domain; it reads MAMNLPPLAG…EIAHLSEASL (778 aa). Residue 104–111 participates in ATP binding; sequence GESGSGKS. Asn-123, Asn-417, Asn-426, and Asn-557 each carry an N-linked (GlcNAc...) asparagine glycan. Disordered stretches follow at residues 593-612 and 620-640; these read KPMR…ARNQ and AEEE…AAKA. The span at 629–640 shows a compositional bias: low complexity; sequence ENNSQAGGAAKA. N-linked (GlcNAc...) asparagine glycosylation is found at Asn-630 and Asn-657. The segment at 655–679 is actin-binding; it reads LDNVTKAVADPSTNSYFVFCLKPND. Helical transmembrane passes span 886–906 and 925–945; these read WLFM…RFIG and LIIW…PMLI. One can recognise a Cytochrome b5 heme-binding domain in the interval 949-1010; the sequence is QHVYSAAELS…YAGKDATSLF (62 aa). 3 N-linked (GlcNAc...) asparagine glycosylation sites follow: Asn-1037, Asn-1062, and Asn-1165. Residues 1201–1221 traverse the membrane as a helical segment; it reads LVLAISIMLVTIIAFKFFAAL. Asn-1458 and Asn-1564 each carry an N-linked (GlcNAc...) asparagine glycan. The next 3 membrane-spanning stretches (helical) occupy residues 1596–1616, 1622–1642, and 1649–1669; these read LSTV…VMVI, VPVT…IIFI, and MIGW…GLPL. Asn-1778 is a glycosylation site (N-linked (GlcNAc...) asparagine). One can recognise a DEK-C domain in the interval 1811–1866; that stretch reads LPSDDALLAEIREILRTADLMTVTKKGIKQELERRFGVPLDAKRAYINSATEALLS.

It in the N-terminal section; belongs to the TRAFAC class myosin-kinesin ATPase superfamily. Myosin family. The protein in the C-terminal section; belongs to the chitin synthase family. Class V subfamily.

It localises to the cell membrane. It catalyses the reaction [(1-&gt;4)-N-acetyl-beta-D-glucosaminyl](n) + UDP-N-acetyl-alpha-D-glucosamine = [(1-&gt;4)-N-acetyl-beta-D-glucosaminyl](n+1) + UDP + H(+). Functionally, polymerizes chitin, a structural polymer of the cell wall and septum, by transferring the sugar moiety of UDP-GlcNAc to the non-reducing end of the growing chitin polymer. Plays a role in cell wall integrity and is involved in tolerance to hyperosmotic conditions. Required to successfully penetrate the host plants and thus plays a key role in pathogenicity. This is Chitin synthase 6 from Verticillium dahliae (strain VdLs.17 / ATCC MYA-4575 / FGSC 10137) (Verticillium wilt).